The chain runs to 629 residues: MKPYPFSAIVGHDRLRLALLLCAVRPEIGGALIRGEKGTAKSTAVRGLAALLSVATGSTETGLVELPLGATEDRVVGSLDLQRVMRDGEHAFSPGLLARAHGGVLYVDEVNLLHDHLVDILLDAAAMGRVHVERDGISHSHEARFVLIGTMNPEEGELRPQLLDRFGLTVDVQASRDIDVRVQVIRRRMAYEADPDAFVARYADADAELAHRIAAARATVDDVVLGDNELRRIAALCAAFDVDGMRADLVVARTAAAHAAWRGVRTVEEQDIRAAAELALPHRRRRDPFDDHGIDRDQLDEALALASVDPEPEPDPPGGGQSANEPASQPNSRSKSTEPGAPSSMGDDPPRPASPRLRSSPRPSAPPSKIFRTRALRVPGVGTGAPGRRSRARNASGSVVAAAEVSDPDAHGLHLFATLLAAGERAFGAGPLRPWPDDVRRAIREGREGNLVIFVVDASGSMAARDRMAAVSGATLSLLRDAYQRRDKVAVITFRQHEATLLLSPTSSAHIAGRRLARFSTGGKTPLAEGLLAARALIIREKVRDRARRPLVVVLTDGRATAGPDPLGRSRTAAAGLVAEGAAAVVVDCETSYVRLGLAAQLARQLGAPVVRLEQLHADYLVHAVRGVA.

Met-1 carries the N-acetylmethionine modification. Residues Val-308–Ala-395 form a disordered region. The segment covering Ser-322–Ser-334 has biased composition (polar residues). The VWFA domain maps to Leu-451 to Val-587.

Belongs to the Mg-chelatase subunits D/I family.

This is an uncharacterized protein from Mycobacterium tuberculosis (strain ATCC 25618 / H37Rv).